We begin with the raw amino-acid sequence, 282 residues long: Aquaporin PIP-type (282 aa).

2 helical membrane passes run 39 to 61 (WRAAIAEFIATLLFLYITVATVI) and 74 to 96 (GLLGIAWSFGGMIFVLVYCTAGI). An NPA 1 motif is present at residues 102–104 (NPA). A run of 4 helical transmembrane segments spans residues 116 to 138 (SLLRALVYMIAQCAGAICGVGLV), 159 to 181 (GYNKGTAFGAELIGTFVLVYTVF), 201 to 223 (LPIGFAVFMVHLATIPITGTGIN), and 243 to 265 (HWIFWVGPFVGALAAAAYHQYVL). The NPA 2 signature appears at 223-225 (NPA).

Belongs to the MIP/aquaporin (TC 1.A.8) family. PIP (TC 1.A.8.11) subfamily.

The protein localises to the membrane. Functionally, water-specific channel. This is Aquaporin PIP-type from Atriplex canescens (Fourwing saltbush).